The primary structure comprises 442 residues: Mimosinase, chloroplastic (442 aa).

The transit peptide at 1–35 (MALPSAFLNPFVPSPVTANPRTKFARVGKGFNVSC) directs the protein to the chloroplast. Residues Tyr103, Arg105, Gly133, Met134, Ser252, and Thr254 each contribute to the pyridoxal 5'-phosphate site. Residue Lys255 is modified to N6-(pyridoxal phosphate)lysine.

Belongs to the trans-sulfuration enzymes family. As to quaternary structure, forms homodimers. May form homotetramers from two homodimers. Requires pyridoxal 5'-phosphate as cofactor.

It is found in the plastid. The protein resides in the chloroplast. It carries out the reaction L-mimosine + H2O = 3-hydroxy-4H-pyrid-4-one + pyruvate + NH4(+). The catalysed reaction is L,L-cystathionine + H2O = L-homocysteine + pyruvate + NH4(+). It catalyses the reaction an S-substituted L-cysteine + H2O = a thiol + pyruvate + NH4(+). In terms of biological role, catalyzes the degradation of mimosine, which is a toxic secondary metabolite found in all Mimosa and Leucaena species. Catalyzes the degradation of cystathionine, but seems to have lower preference toward cystathionine over mimosine. This Mimosa pudica (Sensitive plant) protein is Mimosinase, chloroplastic.